The chain runs to 69 residues: Metallothionein-like protein 3 (69 aa).

Belongs to the metallothionein superfamily. Type 15 family. As to expression, expressed in leaf mesophyll cells, root tips, and at low levels in anthers.

Metallothioneins have a high content of cysteine residues that bind various heavy metals. Functions as a metal chelator of copper (Cu) and zinc (Zn). Plays a role in Cu homeostasis, specifically in the remobilization of Cu from senescing leaves. The mobilization of Cu from internal sources is important for seed development. This chain is Metallothionein-like protein 3, found in Arabidopsis thaliana (Mouse-ear cress).